The sequence spans 478 residues: Ribosomal RNA small subunit methyltransferase F (478 aa).

Residues Ala123 to Lys129, Glu147, Asp174, and Asp192 contribute to the S-adenosyl-L-methionine site. Cys245 functions as the Nucleophile in the catalytic mechanism.

Belongs to the class I-like SAM-binding methyltransferase superfamily. RsmB/NOP family.

The protein resides in the cytoplasm. The enzyme catalyses cytidine(1407) in 16S rRNA + S-adenosyl-L-methionine = 5-methylcytidine(1407) in 16S rRNA + S-adenosyl-L-homocysteine + H(+). In terms of biological role, specifically methylates the cytosine at position 1407 (m5C1407) of 16S rRNA. The protein is Ribosomal RNA small subunit methyltransferase F of Vibrio parahaemolyticus serotype O3:K6 (strain RIMD 2210633).